The following is a 237-amino-acid chain: Demethylmenaquinone methyltransferase (237 aa).

S-adenosyl-L-methionine-binding positions include Thr-62, Asp-80, 102-103, and Ser-119; that span reads DA.

The protein belongs to the class I-like SAM-binding methyltransferase superfamily. MenG/UbiE family.

It catalyses the reaction a 2-demethylmenaquinol + S-adenosyl-L-methionine = a menaquinol + S-adenosyl-L-homocysteine + H(+). The protein operates within quinol/quinone metabolism; menaquinone biosynthesis; menaquinol from 1,4-dihydroxy-2-naphthoate: step 2/2. In terms of biological role, methyltransferase required for the conversion of demethylmenaquinol (DMKH2) to menaquinol (MKH2). The polypeptide is Demethylmenaquinone methyltransferase (Renibacterium salmoninarum (strain ATCC 33209 / DSM 20767 / JCM 11484 / NBRC 15589 / NCIMB 2235)).